Consider the following 400-residue polypeptide: Molybdenum-containing formylmethanofuran dehydrogenase 1 subunit C (400 aa).

Tandem repeats lie at residues 76-88 (GSGMKSGKIIING), 95-107 (GCEMKGGEIEVNG), 114-126 (GMEMHGGTIKING), 140-152 (WRGMKGGKIIIQG), 159-171 (GGGMMAGEIYIGG), 178-190 (GIRMNGGEITVRG), and 197-209 (GAEMVSGIIKIHG). The tract at residues 76-209 (GSGMKSGKII…MVSGIIKIHG (134 aa)) is 7 X 13 AA repeats of [GW]-X-X-M-X-X-G-X-I-X-[IV]-X-G.

In the N-terminal section; belongs to the FwdC/FmdC family. This sequence in the C-terminal section; belongs to the molybdenum dinucleotide binding protein family. In terms of assembly, consists of five subunits; FmdA, FmdB, FmdC, FmdD, and FmdE.

The catalysed reaction is N-formylmethanofuran + 2 oxidized [2Fe-2S]-[ferredoxin] + H2O = methanofuran + 2 reduced [2Fe-2S]-[ferredoxin] + CO2 + H(+). Its pathway is one-carbon metabolism; methanogenesis from CO(2); 5,10-methenyl-5,6,7,8-tetrahydromethanopterin from CO(2): step 1/3. Inactivated by cyanide. Functionally, catalyzes the reversible oxidation of CO(2) and methanofuran (MFR) to N-formylmethanofuran (CHO-MFR). Can only oxidize formylmethanofuran. This enzyme is oxygen-labile. The protein is Molybdenum-containing formylmethanofuran dehydrogenase 1 subunit C (fmdC) of Methanothermobacter thermautotrophicus (strain ATCC 29096 / DSM 1053 / JCM 10044 / NBRC 100330 / Delta H) (Methanobacterium thermoautotrophicum).